Reading from the N-terminus, the 99-residue chain is uncharacterized protein (99 aa).

The chain crosses the membrane as a helical span at residues Glu10–Gly29.

Its subcellular location is the membrane. This is an uncharacterized protein from Schizosaccharomyces pombe (strain 972 / ATCC 24843) (Fission yeast).